A 61-amino-acid chain; its full sequence is Small ribosomal subunit protein eS31 (61 aa).

Zn(2+) is bound by residues Cys22, Cys25, Cys38, and Cys41. The C4-type zinc finger occupies Cys22–Cys41.

Belongs to the eukaryotic ribosomal protein eS31 family. In terms of assembly, part of the 30S ribosomal subunit. Requires Zn(2+) as cofactor.

This chain is Small ribosomal subunit protein eS31, found in Nanoarchaeum equitans (strain Kin4-M).